The sequence spans 478 residues: Zinc metalloproteinase/disintegrin (478 aa).

Positions 1 to 20 (MIEVLLVTICLAVFPYPGSS) are cleaved as a signal peptide. A propeptide spanning residues 21 to 190 (IILESGNVDD…KASQLYLTPE (170 aa)) is cleaved from the precursor. Gln191 bears the Pyrrolidone carboxylic acid mark. Residues 197–392 (RYIELAIVVD…SKPQCIINAP (196 aa)) enclose the Peptidase M12B domain. Glu200 and Asp284 together coordinate Ca(2+). 3 disulfides stabilise this stretch: Cys308–Cys387, Cys349–Cys371, and Cys351–Cys354. His333 contacts Zn(2+). The active site involves Glu334. Residues His337 and His343 each coordinate Zn(2+). Positions 387 and 390 each coordinate Ca(2+). Residues 393–410 (LRTDTVSTPVSGNEFLEA) constitute a propeptide that is removed on maturation. One can recognise a Disintegrin domain in the interval 400–478 (TPVSGNEFLE…GQSADCPRNS (79 aa)). Intrachain disulfides connect Cys414–Cys429, Cys416–Cys424, Cys423–Cys446, Cys437–Cys443, Cys442–Cys467, and Cys455–Cys474. The short motif at 459–461 (RGD) is the Cell attachment site element. The disordered stretch occupies residues 459–478 (RGDNPDDRCTGQSADCPRNS). Residues 468–478 (TGQSADCPRNS) show a composition bias toward polar residues.

It belongs to the venom metalloproteinase (M12B) family. P-II subfamily. P-IIa sub-subfamily. In terms of assembly, monomer. Zn(2+) is required as a cofactor. Post-translationally, not N-glycosylated. In terms of tissue distribution, expressed by the venom gland.

Its subcellular location is the secreted. It catalyses the reaction Cleavage of 3-Asn-|-Gln-4, 10-His-|-Leu-11 and 14-Ala-|-Leu-15 in the insulin B chain, and the bond Z-Gly-Pro-|-Leu-Gly-Pro in a small molecule substrate of microbial collagenase.. Its function is as follows. Zinc protease that induces hemorrhage. In terms of biological role, inhibits platelet aggregation induced by ADP, thrombin, and collagen. Acts by inhibiting fibrinogen interaction with platelet receptors GPIIb/GPIIIa (ITGA2B/ITGB3). This chain is Zinc metalloproteinase/disintegrin, found in Protobothrops flavoviridis (Habu).